The chain runs to 265 residues: 3-methyl-2-oxobutanoate hydroxymethyltransferase (265 aa).

2 residues coordinate Mg(2+): Asp-46 and Asp-85. Residues 46–47 (DS), Asp-85, and Lys-114 contribute to the 3-methyl-2-oxobutanoate site. Glu-116 contacts Mg(2+). Glu-183 (proton acceptor) is an active-site residue.

This sequence belongs to the PanB family. As to quaternary structure, homodecamer; pentamer of dimers. Mg(2+) is required as a cofactor.

The protein resides in the cytoplasm. It catalyses the reaction 3-methyl-2-oxobutanoate + (6R)-5,10-methylene-5,6,7,8-tetrahydrofolate + H2O = 2-dehydropantoate + (6S)-5,6,7,8-tetrahydrofolate. Its pathway is cofactor biosynthesis; coenzyme A biosynthesis. Catalyzes the reversible reaction in which hydroxymethyl group from 5,10-methylenetetrahydrofolate is transferred onto alpha-ketoisovalerate to form ketopantoate. The polypeptide is 3-methyl-2-oxobutanoate hydroxymethyltransferase (Caldivirga maquilingensis (strain ATCC 700844 / DSM 13496 / JCM 10307 / IC-167)).